Reading from the N-terminus, the 498-residue chain is MRTNSTTSGPGVPTLEKKNLGRIAQIIGPVLDVAFPPGKMPNIYNALIVTGQDTTGQPINVTCEVQQLLGNNRVRAVAMSATDGLMRGMEVIDTGAPLSVPVGGATLGRIFNVLGEPVDNLGPVDTRTTSPIHRSAPAFTQLDTKLSIFETGIKVVDLLAPYRRGGKIGLFGGAGVGKTVLIMELINNIAKAHGGVSVFGGVGERTREGNDLYMEMKESGVINEQNIAESKVALVYGQMNEPPGARMRVGLTALTMAEYFRDVNEQDVLLFIDNILRFVQAGSEVSALLGRMPSAVGYQPTLSTEMGSLQERITSTKEGSITSIQAVYVPADDLTDPAPATTFAHLDATTVLSRGLAAKGIYPAVDPLDSTSTMLQPRIVGEEHYEIAQRVKQTLQRYKELQDIIAILGLDELSEEDRLTVARARKIERFLSQPFFVAEVFTGSPGKYVGLAETIRGFQLIFSGELDGLPEQAFYLVGNIDEVTAKAMNLEMESKLKK.

Gly-172–Thr-179 is an ATP binding site.

The protein belongs to the ATPase alpha/beta chains family. In terms of assembly, F-type ATPases have 2 components, CF(1) - the catalytic core - and CF(0) - the membrane proton channel. CF(1) has five subunits: alpha(3), beta(3), gamma(1), delta(1), epsilon(1). CF(0) has four main subunits: a(1), b(1), b'(1) and c(9-12).

Its subcellular location is the plastid. It localises to the chloroplast thylakoid membrane. It carries out the reaction ATP + H2O + 4 H(+)(in) = ADP + phosphate + 5 H(+)(out). Its function is as follows. Produces ATP from ADP in the presence of a proton gradient across the membrane. The catalytic sites are hosted primarily by the beta subunits. In Beta vulgaris (Sugar beet), this protein is ATP synthase subunit beta, chloroplastic.